A 352-amino-acid chain; its full sequence is Light dependent period A (352 aa).

4Fe-4S ferredoxin-type domains are found at residues 88–119 (RRAW…STGV) and 121–144 (RDRC…AQAW). Cys-97, Cys-101, Cys-105, Cys-109, Cys-124, Cys-127, Cys-130, and Cys-134 together coordinate [4Fe-4S] cluster.

As to quaternary structure, interacts with KaiA, CikA and SasA; the complexes do not follow circadian rhythms. Requires [4Fe-4S] cluster as cofactor.

Its function is as follows. Functions in an input pathway to the Kai circadian clock. Probably senses the metabolic state of the cell via plastoquinone levels and informs the clock to modulate the photoperiod length. Deletion decreases the ability of the bacteria to modulate the circadian period in response to altered light regimes. Mild overexpression increases the photoperiod. Rapidly degraded in the presence of the quinone analog DBMIB (2,5-dibromo-3-methyl-6-isopropyl-p-benzoquinone), an artifical electron acceptor for photosystem II that reduces the plastoquinone pool. Partially resonsible for sensitivity of CikA to DBMIB, influences the levels of KaiA. The sequence is that of Light dependent period A from Synechococcus elongatus (strain ATCC 33912 / PCC 7942 / FACHB-805) (Anacystis nidulans R2).